The sequence spans 475 residues: Equilibrative nucleoside transporter 3 (475 aa).

At 1–51 the chain is on the cytoplasmic side; it reads MAFASEDNVYHSSNAVYRAPSNHQEADQEALLGKLLDYPAPGLQRPEDRFN. S21 bears the Phosphoserine mark. The Dileucine internalization motif motif lies at 31–32; the sequence is LL. Residues 52 to 72 form a helical membrane-spanning segment; that stretch reads GAYIIFFCLGIGGLLPWNFFV. The Extracellular segment spans residues 73–105; the sequence is TAKEYWAYKLRNCSSPASGEDPEDMDILNYFES. N-linked (GlcNAc...) asparagine glycosylation occurs at N84. The helical transmembrane segment at 106–126 threads the bilayer; that stretch reads YLAVASTVPSLLFLVANFLLV. Residues 127–134 lie on the Cytoplasmic side of the membrane; it reads NRVQVHVR. A helical transmembrane segment spans residues 135 to 155; sequence VLASLSVSLAIFVVMIVLVKV. The Extracellular segment spans residues 156 to 162; sequence DTSSWTR. The chain crosses the membrane as a helical span at residues 163–183; it reads GFFSLTIACMAIISSSSTIFN. At 184 to 199 the chain is on the cytoplasmic side; sequence SSVYGLTGSFPMRNAQ. A helical membrane pass occupies residues 200 to 220; the sequence is ALISGGAMGGTVSAVALLVDL. At 221-230 the chain is on the extracellular side; sequence AASSDVRDST. The helical transmembrane segment at 231–251 threads the bilayer; that stretch reads LAFFLMAAVFLGLCMGLYLLL. Residues 252-305 are Cytoplasmic-facing; the sequence is SQLEYARYYMRPVAPVRVFSGEDNPSQDAPSASSVAPASRVMHTPPLGPILKKT. The helical transmembrane segment at 306-326 threads the bilayer; the sequence is ASLGFCAVSLYFVTAFIIPAI. At 327–340 the chain is on the extracellular side; it reads STNIQSMHKGTGSP. A helical transmembrane segment spans residues 341–361; sequence WTSKFFVPLTVFLLFNFADLC. The Cytoplasmic segment spans residues 362 to 377; sequence GRQVTAWIQVPGPRSK. Residues 378 to 398 traverse the membrane as a helical segment; it reads LLPGLVVSRFCLVPLFLLCNY. At 399-415 the chain is on the extracellular side; that stretch reads QPRSHLTKVLFQSDIYP. A helical transmembrane segment spans residues 416–436; it reads VLFTCLLGLSNGYLSTLVLIY. At 437-450 the chain is on the cytoplasmic side; that stretch reads GPKIVPRELAEATS. Residues 451-471 traverse the membrane as a helical segment; that stretch reads VVMLFYMSVGLMLGSACAALL. Topologically, residues 472-475 are extracellular; sequence EHFI.

The protein belongs to the SLC29A/ENT transporter (TC 2.A.57) family. Expressed in macrophages.

The protein resides in the lysosome membrane. It localises to the late endosome membrane. The protein localises to the mitochondrion membrane. Its subcellular location is the cell membrane. The enzyme catalyses adenosine(in) = adenosine(out). It carries out the reaction guanosine(in) = guanosine(out). The catalysed reaction is inosine(in) = inosine(out). It catalyses the reaction uridine(out) = uridine(in). The enzyme catalyses cytidine(in) = cytidine(out). It carries out the reaction thymidine(in) = thymidine(out). The catalysed reaction is 2'-deoxyadenosine(in) = 2'-deoxyadenosine(out). It catalyses the reaction 2'-deoxycytidine(in) = 2'-deoxycytidine(out). The enzyme catalyses guanine(out) = guanine(in). It carries out the reaction uracil(in) = uracil(out). The catalysed reaction is (R)-noradrenaline(out) = (R)-noradrenaline(in). It catalyses the reaction dopamine(out) = dopamine(in). The enzyme catalyses serotonin(out) = serotonin(in). It carries out the reaction tyramine(in) = tyramine(out). The catalysed reaction is ATP(in) = ATP(out). Its function is as follows. Uniporter that mediates the facilitative transport of nucleoside across lysosomal and mitochondrial membranes. Functions as a non-electrogenic Na(+)-independent transporter. Substrate transport is pH-dependent and enhanced under acidic condition, probably reflecting the location of the transporter in acidic intracellular compartments. Proton is not a cotransporting ion but most likely change the ionization state of the transporter which dictates transport-permissible/impermissible conformation for nucleoside translocation. May direct the nucleoside transport from lysosomes to cytosol or cytosol to mitochondria to facilitate the fundamental function of salvage synthesis of nucleic acids. Involved in the transport of nucleosides (adenosine, guanosine, uridine, thymidine, cytidine and inosine) and deoxynucleosides (deoxyadenosine, deoxycytidine). Also mediates transport of purine nucleobases (adenine, guanine), and pyrimidine nucleobases (uracil). Also able to transport monoamine neurotransmitters dopamine, serotonin, noradrenaline and tyramine. Capable of transporting ATP. Mediates nucleoside export from lysosomes in macrophages, which regulates macrophage functions and numbers. In Mus musculus (Mouse), this protein is Equilibrative nucleoside transporter 3.